The following is a 63-amino-acid chain: MARVCSVCGKGTTFGHNVSHSNRRTNRRWVANLKRVHGRFPDGKVRTAYVCVKCLKAGKVEIL.

The protein belongs to the bacterial ribosomal protein bL28 family.

The chain is Large ribosomal subunit protein bL28 from Coprothermobacter proteolyticus (strain ATCC 35245 / DSM 5265 / OCM 4 / BT).